The chain runs to 709 residues: F-box only protein 40 (709 aa).

A TRAF-type zinc finger spans residues glutamate 53–histidine 112. The segment at threonine 232–threonine 280 is disordered. Composition is skewed to basic and acidic residues over residues serine 240–glutamine 250 and glycine 262–aspartate 277. The F-box domain maps to glutamine 570–lysine 624.

As to quaternary structure, directly interacts with SKP1 and CUL1. Expressed only in heart and skeletal muscle.

The protein localises to the cytoplasm. In terms of biological role, probable substrate-recognition component of the SCF (SKP1-CUL1-F-box protein)-type E3 ubiquitin ligase complex that may function in myogenesis. The protein is F-box only protein 40 (FBXO40) of Homo sapiens (Human).